Reading from the N-terminus, the 116-residue chain is Large ribosomal subunit protein uL23 (116 aa).

This sequence belongs to the universal ribosomal protein uL23 family. As to quaternary structure, part of the 50S ribosomal subunit. Contacts protein L29, and trigger factor when it is bound to the ribosome.

In terms of biological role, one of the early assembly proteins it binds 23S rRNA. One of the proteins that surrounds the polypeptide exit tunnel on the outside of the ribosome. Forms the main docking site for trigger factor binding to the ribosome. This chain is Large ribosomal subunit protein uL23, found in Psychrobacter sp. (strain PRwf-1).